A 371-amino-acid chain; its full sequence is Glutamate 5-kinase (371 aa).

An ATP-binding site is contributed by Lys10. The substrate site is built by Ser50, Asp137, and Asn149. ATP contacts are provided by residues 169–170 and 208–214; these read SD and TGGMYTK. Positions 274–352 constitute a PUA domain; that stretch reads QGKVYIDDGA…EEIKNILGED (79 aa).

It belongs to the glutamate 5-kinase family.

The protein localises to the cytoplasm. The catalysed reaction is L-glutamate + ATP = L-glutamyl 5-phosphate + ADP. The protein operates within amino-acid biosynthesis; L-proline biosynthesis; L-glutamate 5-semialdehyde from L-glutamate: step 1/2. Catalyzes the transfer of a phosphate group to glutamate to form L-glutamate 5-phosphate. The polypeptide is Glutamate 5-kinase (Dictyoglomus thermophilum (strain ATCC 35947 / DSM 3960 / H-6-12)).